A 350-amino-acid chain; its full sequence is Bifunctional methylenetetrahydrofolate dehydrogenase/cyclohydrolase, mitochondrial (350 aa).

A mitochondrion-targeting transit peptide spans 1–35 (MASVSLLSALAVRLLRPTHGCHPRLQPFHLAAVRN). Lys-50 bears the N6-acetyllysine; alternate mark. Lys-50 is covalently cross-linked (Glycyl lysine isopeptide (Lys-Gly) (interchain with G-Cter in SUMO2); alternate). Substrate contacts are provided by residues 84–88 (YVLNK) and 131–133 (VQL). NAD(+) contacts are provided by residues 200–202 (GRS) and Arg-233. Residue 309–313 (PGGVG) coordinates substrate.

The protein belongs to the tetrahydrofolate dehydrogenase/cyclohydrolase family. As to quaternary structure, homodimer. Mg(2+) is required as a cofactor.

It is found in the mitochondrion. The enzyme catalyses (6R)-5,10-methylene-5,6,7,8-tetrahydrofolate + NAD(+) = (6R)-5,10-methenyltetrahydrofolate + NADH. It catalyses the reaction (6R)-5,10-methenyltetrahydrofolate + H2O = (6R)-10-formyltetrahydrofolate + H(+). Its function is as follows. Although its dehydrogenase activity is NAD-specific, it can also utilize NADP at a reduced efficiency. This chain is Bifunctional methylenetetrahydrofolate dehydrogenase/cyclohydrolase, mitochondrial (Mthfd2), found in Mus musculus (Mouse).